Reading from the N-terminus, the 532-residue chain is Maternal protein exuperantia (532 aa).

Disordered stretches follow at residues Cys206–Gln251 and Thr403–Lys491. Composition is skewed to low complexity over residues Gly220–Ser231 and Val404–Asn417. The segment covering Ser454 to Ser467 has biased composition (polar residues). Ser467 is modified (phosphoserine).

Component of the osk RNP complex, which is composed of at least exuperantia (exu), ypsilon schachtel (yps), aret (bruno), cup, and the mRNA of osk. In the sponge body, forms a ribonucleoprotein complex (RNP) containing at least me31B, exu, yps and the mRNA of osk; interactions with exu and yps are RNA dependent.

It localises to the cytoplasm. The protein resides in the cytoplasmic ribonucleoprotein granule. In terms of biological role, ensures the proper localization of the mRNA of the bicoid gene to the anterior regions of the oocyte thus playing a fundamental role in the establishment of the polarity of the oocyte. May bind the bcd mRNA. The chain is Maternal protein exuperantia (exu) from Drosophila melanogaster (Fruit fly).